The primary structure comprises 348 residues: D-erythrose-4-phosphate dehydrogenase (348 aa).

Residues 12-13 (RI) and Arg-81 each bind NAD(+). Substrate-binding positions include 154–156 (SCT), Arg-200, 213–214 (TK), and Arg-236. Catalysis depends on Cys-155, which acts as the Nucleophile. Position 318 (Asn-318) interacts with NAD(+).

It belongs to the glyceraldehyde-3-phosphate dehydrogenase family. Epd subfamily. Homotetramer.

It localises to the cytoplasm. The catalysed reaction is D-erythrose 4-phosphate + NAD(+) + H2O = 4-phospho-D-erythronate + NADH + 2 H(+). It functions in the pathway cofactor biosynthesis; pyridoxine 5'-phosphate biosynthesis; pyridoxine 5'-phosphate from D-erythrose 4-phosphate: step 1/5. Catalyzes the NAD-dependent conversion of D-erythrose 4-phosphate to 4-phosphoerythronate. This Salmonella gallinarum (strain 287/91 / NCTC 13346) protein is D-erythrose-4-phosphate dehydrogenase.